The following is a 296-amino-acid chain: Nucleotide-binding protein SSA_0810 (296 aa).

13–20 (GMSGAGKT) is a binding site for ATP. Residue 63–66 (DMRS) participates in GTP binding. Positions 277 to 296 (WPVNSSHRDKNRRKETVNRS) are disordered. The segment covering 282 to 296 (SHRDKNRRKETVNRS) has biased composition (basic and acidic residues).

The protein belongs to the RapZ-like family.

In terms of biological role, displays ATPase and GTPase activities. This is Nucleotide-binding protein SSA_0810 from Streptococcus sanguinis (strain SK36).